A 449-amino-acid chain; its full sequence is Putative cytochrome P450 135A1 (449 aa).

Heme is bound at residue Cys383.

This sequence belongs to the cytochrome P450 family. Heme is required as a cofactor.

This chain is Putative cytochrome P450 135A1 (cyp135A1), found in Mycobacterium tuberculosis (strain CDC 1551 / Oshkosh).